The chain runs to 199 residues: Protein GrpE (199 aa).

A disordered region spans residues 1–27; sequence MSEQNTNHESPEQNVAHDNIEHSDSIL. The span at 18 to 27 shows a compositional bias: basic and acidic residues; sequence DNIEHSDSIL.

It belongs to the GrpE family. Homodimer.

Its subcellular location is the cytoplasm. Its function is as follows. Participates actively in the response to hyperosmotic and heat shock by preventing the aggregation of stress-denatured proteins, in association with DnaK and GrpE. It is the nucleotide exchange factor for DnaK and may function as a thermosensor. Unfolded proteins bind initially to DnaJ; upon interaction with the DnaJ-bound protein, DnaK hydrolyzes its bound ATP, resulting in the formation of a stable complex. GrpE releases ADP from DnaK; ATP binding to DnaK triggers the release of the substrate protein, thus completing the reaction cycle. Several rounds of ATP-dependent interactions between DnaJ, DnaK and GrpE are required for fully efficient folding. This chain is Protein GrpE, found in Psychrobacter sp. (strain St1).